The chain runs to 197 residues: MNILIIFVSYLLGSLPTGFLIGKYLKNIDLRNIGSGSTGATNVLRNVGKWPALIVFIIDVGKGLIAVKIAQHYTDQGLIEVIAGISAITGHIWPIWLRGKGGKAVATGLGMFLALSWKVGLASLGIFLIVLAKTKFVSLSSISAAIFLPFFMFFYLGNYMHSYFFISLIVALLVIWKHRTNITRLLKGEESKINQNQ.

Transmembrane regions (helical) follow at residues 1–21, 50–70, 77–97, 111–131, 136–156, and 157–177; these read MNILIIFVSYLLGSLPTGFLI, WPALIVFIIDVGKGLIAVKIA, GLIEVIAGISAITGHIWPIWL, MFLALSWKVGLASLGIFLIVL, FVSLSSISAAIFLPFFMFFYL, and GNYMHSYFFISLIVALLVIWK.

This sequence belongs to the PlsY family. In terms of assembly, probably interacts with PlsX.

Its subcellular location is the cell inner membrane. It carries out the reaction an acyl phosphate + sn-glycerol 3-phosphate = a 1-acyl-sn-glycero-3-phosphate + phosphate. It participates in lipid metabolism; phospholipid metabolism. Its function is as follows. Catalyzes the transfer of an acyl group from acyl-phosphate (acyl-PO(4)) to glycerol-3-phosphate (G3P) to form lysophosphatidic acid (LPA). This enzyme utilizes acyl-phosphate as fatty acyl donor, but not acyl-CoA or acyl-ACP. The sequence is that of Glycerol-3-phosphate acyltransferase from Prochlorococcus marinus (strain MIT 9312).